Reading from the N-terminus, the 178-residue chain is 2-C-methyl-D-erythritol 2,4-cyclodiphosphate synthase (178 aa).

Positions 24, 26, and 61 each coordinate a divalent metal cation. 4-CDP-2-C-methyl-D-erythritol 2-phosphate is bound at residue 24-26; the sequence is DSH. A 4-CDP-2-C-methyl-D-erythritol 2-phosphate-binding site is contributed by 150–153; the sequence is TSGE.

This sequence belongs to the IspF family. Homotrimer. Requires a divalent metal cation as cofactor.

It carries out the reaction 4-CDP-2-C-methyl-D-erythritol 2-phosphate = 2-C-methyl-D-erythritol 2,4-cyclic diphosphate + CMP. It functions in the pathway isoprenoid biosynthesis; isopentenyl diphosphate biosynthesis via DXP pathway; isopentenyl diphosphate from 1-deoxy-D-xylulose 5-phosphate: step 4/6. Its function is as follows. Involved in the biosynthesis of isopentenyl diphosphate (IPP) and dimethylallyl diphosphate (DMAPP), two major building blocks of isoprenoid compounds. Catalyzes the conversion of 4-diphosphocytidyl-2-C-methyl-D-erythritol 2-phosphate (CDP-ME2P) to 2-C-methyl-D-erythritol 2,4-cyclodiphosphate (ME-CPP) with a corresponding release of cytidine 5-monophosphate (CMP). This is 2-C-methyl-D-erythritol 2,4-cyclodiphosphate synthase from Chlamydia muridarum (strain MoPn / Nigg).